The primary structure comprises 293 residues: Diaminopimelate epimerase (293 aa).

Substrate is bound by residues N11 and N78. C87 (proton donor) is an active-site residue. Substrate-binding positions include G88–N89, N166, N202, and E220–R221. The active-site Proton acceptor is C229. Position 230–231 (G230–T231) interacts with substrate.

The protein belongs to the diaminopimelate epimerase family. In terms of assembly, homodimer.

The protein resides in the cytoplasm. It catalyses the reaction (2S,6S)-2,6-diaminopimelate = meso-2,6-diaminopimelate. The protein operates within amino-acid biosynthesis; L-lysine biosynthesis via DAP pathway; DL-2,6-diaminopimelate from LL-2,6-diaminopimelate: step 1/1. Functionally, catalyzes the stereoinversion of LL-2,6-diaminopimelate (L,L-DAP) to meso-diaminopimelate (meso-DAP), a precursor of L-lysine and an essential component of the bacterial peptidoglycan. The chain is Diaminopimelate epimerase from Mycobacterium sp. (strain JLS).